A 226-amino-acid polypeptide reads, in one-letter code: Uridylate kinase (226 aa).

9–13 contacts ATP; it reads KVSGK. Position 46 (Gly46) interacts with UMP. ATP-binding residues include Gly47 and Arg51. UMP contacts are provided by residues Asp68 and 116 to 122; that span reads FQPGQST. 3 residues coordinate ATP: Thr142, Tyr148, and Asp151.

Belongs to the UMP kinase family. In terms of assembly, homohexamer.

The protein localises to the cytoplasm. The catalysed reaction is UMP + ATP = UDP + ADP. Its pathway is pyrimidine metabolism; CTP biosynthesis via de novo pathway; UDP from UMP (UMPK route): step 1/1. Inhibited by UTP. Functionally, catalyzes the reversible phosphorylation of UMP to UDP. The chain is Uridylate kinase from Hyperthermus butylicus (strain DSM 5456 / JCM 9403 / PLM1-5).